The chain runs to 721 residues: Choline O-acetyltransferase (721 aa).

Histidine 419 (proton acceptor) is an active-site residue. CoA-binding positions include 496–508 (GKTF…VSPD), serine 534, and glutamine 656.

The protein belongs to the carnitine/choline acetyltransferase family. The 54 kDa and 13 kDa chains exist as a heterodimer. The N-terminus of choline O-acetyltransferase 67 kDa and 54 kDa chains are blocked.

The enzyme catalyses choline + acetyl-CoA = acetylcholine + CoA. Its function is as follows. Catalyzes the reversible synthesis of acetylcholine (ACh) from acetyl CoA and choline at cholinergic synapses. The protein is Choline O-acetyltransferase of Drosophila melanogaster (Fruit fly).